The primary structure comprises 105 residues: Large ribosomal subunit protein uL23 (105 aa).

It belongs to the universal ribosomal protein uL23 family. In terms of assembly, part of the 50S ribosomal subunit. Contacts protein L29, and trigger factor when it is bound to the ribosome.

Functionally, one of the early assembly proteins it binds 23S rRNA. One of the proteins that surrounds the polypeptide exit tunnel on the outside of the ribosome. Forms the main docking site for trigger factor binding to the ribosome. This Herminiimonas arsenicoxydans protein is Large ribosomal subunit protein uL23.